A 318-amino-acid polypeptide reads, in one-letter code: MASGNCTTPTTFILSGLTDNPGLQMPLFMVFLAIYTITLLTNLGLIALISVDLHLQTPMYIFLQNLSFTDAAYSTVITPKMLATFLEERKTISYVGCILQYFSFVLLTVTESLLLAVMAYDRYVAICKPLLYPSIMTKAVCWRLVESLYFLAFLNSLVHTSGLLKLSFCYSNVVNHFFCDISPLFQISSSSIAISELLVIISGSLFVMSSIIIILISYVFIILTVVMIRSKDGKYKAFSTCTSHLMAVSLFHGTVIFMYLRPVKLFSLDTDKIASLFYTVVIPMLNPLIYSWRNKEVKDALRRLTATTFGFIDSKAVQ.

The Extracellular portion of the chain corresponds to 1–26 (MASGNCTTPTTFILSGLTDNPGLQMP). An N-linked (GlcNAc...) asparagine glycan is attached at asparagine 5. Residues 27 to 49 (LFMVFLAIYTITLLTNLGLIALI) traverse the membrane as a helical segment. Over 50-57 (SVDLHLQT) the chain is Cytoplasmic. A helical membrane pass occupies residues 58–79 (PMYIFLQNLSFTDAAYSTVITP). The Extracellular portion of the chain corresponds to 80–100 (KMLATFLEERKTISYVGCILQ). The cysteines at positions 97 and 179 are disulfide-linked. Residues 101-120 (YFSFVLLTVTESLLLAVMAY) form a helical membrane-spanning segment. Over 121 to 139 (DRYVAICKPLLYPSIMTKA) the chain is Cytoplasmic. Residues 140 to 164 (VCWRLVESLYFLAFLNSLVHTSGLL) traverse the membrane as a helical segment. Residues 165-205 (KLSFCYSNVVNHFFCDISPLFQISSSSIAISELLVIISGSL) lie on the Extracellular side of the membrane. The helical transmembrane segment at 206–226 (FVMSSIIIILISYVFIILTVV) threads the bilayer. The Cytoplasmic portion of the chain corresponds to 227-239 (MIRSKDGKYKAFS). A helical membrane pass occupies residues 240 to 260 (TCTSHLMAVSLFHGTVIFMYL). Residues 261–271 (RPVKLFSLDTD) lie on the Extracellular side of the membrane. Residues 272–292 (KIASLFYTVVIPMLNPLIYSW) form a helical membrane-spanning segment. Residues 293-318 (RNKEVKDALRRLTATTFGFIDSKAVQ) are Cytoplasmic-facing.

It belongs to the G-protein coupled receptor 1 family.

The protein localises to the cell membrane. Odorant receptor. The chain is Olfactory receptor-like protein COR1 (COR1) from Gallus gallus (Chicken).